A 303-amino-acid chain; its full sequence is UDP-N-acetylenolpyruvoylglucosamine reductase (303 aa).

The FAD-binding PCMH-type domain maps to I32–K212. R176 is a catalytic residue. S226 functions as the Proton donor in the catalytic mechanism. E296 is an active-site residue.

It belongs to the MurB family. It depends on FAD as a cofactor.

The protein localises to the cytoplasm. It carries out the reaction UDP-N-acetyl-alpha-D-muramate + NADP(+) = UDP-N-acetyl-3-O-(1-carboxyvinyl)-alpha-D-glucosamine + NADPH + H(+). The protein operates within cell wall biogenesis; peptidoglycan biosynthesis. Cell wall formation. In Desulforamulus reducens (strain ATCC BAA-1160 / DSM 100696 / MI-1) (Desulfotomaculum reducens), this protein is UDP-N-acetylenolpyruvoylglucosamine reductase.